We begin with the raw amino-acid sequence, 436 residues long: Serine--tRNA ligase (436 aa).

T239 to E241 contributes to the L-serine binding site. Residue R270–E272 coordinates ATP. Position 293 (E293) interacts with L-serine. An ATP-binding site is contributed by E357–S360. Residue S393 participates in L-serine binding.

The protein belongs to the class-II aminoacyl-tRNA synthetase family. Type-1 seryl-tRNA synthetase subfamily. As to quaternary structure, homodimer. The tRNA molecule binds across the dimer.

It localises to the cytoplasm. It carries out the reaction tRNA(Ser) + L-serine + ATP = L-seryl-tRNA(Ser) + AMP + diphosphate + H(+). The enzyme catalyses tRNA(Sec) + L-serine + ATP = L-seryl-tRNA(Sec) + AMP + diphosphate + H(+). It participates in aminoacyl-tRNA biosynthesis; selenocysteinyl-tRNA(Sec) biosynthesis; L-seryl-tRNA(Sec) from L-serine and tRNA(Sec): step 1/1. Catalyzes the attachment of serine to tRNA(Ser). Is also able to aminoacylate tRNA(Sec) with serine, to form the misacylated tRNA L-seryl-tRNA(Sec), which will be further converted into selenocysteinyl-tRNA(Sec). The protein is Serine--tRNA ligase of Blochmanniella floridana.